A 187-amino-acid chain; its full sequence is 5-hmdU DNA kinase (187 aa).

Belongs to the thymidylate kinase family. 5-hmdU DNA kinase subfamily.

It carries out the reaction 5-hydroxymethyl-dUMP in DNA + ATP = 5-phosphomethyl-dUMP in DNA + ADP + H(+). Its function is as follows. Phosphorylates 5-hydroxymethyluracil (5hmdU) into 5-phosphomethyl-2'-deoxyuridine (5-PmdU) on DNA as a step in the pathway leading to thymidine hypermodifications in the viral genome. The phosphate is added internally to the DNA polymer. Also transfers glutamate to 5-pyrophosphoryloxymethyldeoxyuridine (5-PPmdU) to produce 5-Nalpha-glyutamylthymidine (Nalpha-GluT). As a final result of the pathway of hypermodification, 5-aminoethyl-2'-deoxyuridine (5-NedU) substitutes for about 30% of thymidines in the viral DNA. These modifications probably prevent degradation of viral genome by the host restriction-modification antiviral defense system. This is 5-hmdU DNA kinase from Pseudomonas phage M6.